A 1038-amino-acid chain; its full sequence is Kinesin-like protein KIN-5B (1038 aa).

A disordered region spans residues 1-63 (MAQTPNPSRR…GGGGGGGSEM (63 aa)). A compositionally biased stretch (basic and acidic residues) spans 24-34 (RPERRQLELRW). A compositionally biased stretch (gly residues) spans 49–61 (GLTGGGGGGGGGS). In terms of domain architecture, Kinesin motor spans 69-410 (NVQVVLRCRP…LDYAYRAKSI (342 aa)). Residue 154–161 (GQTGTGKT) coordinates ATP. A coiled-coil region spans residues 453–502 (QERFALEEAEKKTMRDKIEYLETQNKELKMNIESCKKEYLDLEEAHSRAN). The tract at residues 1013–1038 (DKGKRYVDQGTRTPRSPLMPVNHYNK) is disordered.

This sequence belongs to the TRAFAC class myosin-kinesin ATPase superfamily. Kinesin family. KIN-5/BimC subfamily.

Its subcellular location is the cytoplasm. It is found in the cytoskeleton. The protein localises to the spindle. Functionally, responsible for microtubule translocation. May be important for the organization of phragmoplast-specific arrays of microtubules. Plays an essential role in stabilizing the mitotic spindle. Required during mitotic cytokinesis. This Oryza sativa subsp. japonica (Rice) protein is Kinesin-like protein KIN-5B.